Consider the following 465-residue polypeptide: COP9 signalosome complex subunit 5 (465 aa).

Positions 74–216 (VLLSKLACSK…IGSFRTYQDQ (143 aa)) constitute an MPN domain. His162, His164, and Asp175 together coordinate Zn(2+). The JAMM motif signature appears at 162 to 175 (HSHPGYDCWLSNID). The segment at 364 to 386 (SSIHTQMNNQNNQQERNSPKRPH) is disordered.

It belongs to the peptidase M67A family. CSN5 subfamily. In terms of assembly, component of the COP9 signalosome (CSN) complex.

It is found in the cytoplasm. The protein resides in the nucleus. Catalytic Component of the COP9 signalosome (CSN) complex that acts as an regulator of the ubiquitin (Ubl) conjugation pathway by mediating the deneddylation of the cullin subunit of SCF-type E3 ubiquitin-protein ligase complexes. In Candida glabrata (strain ATCC 2001 / BCRC 20586 / JCM 3761 / NBRC 0622 / NRRL Y-65 / CBS 138) (Yeast), this protein is COP9 signalosome complex subunit 5 (RRI1).